A 197-amino-acid polypeptide reads, in one-letter code: Potassium-transporting ATPase KdpC subunit (197 aa).

The helical transmembrane segment at 9 to 29 threads the bilayer; it reads LVVTLLLAALLCGAYPVLVTG.

The protein belongs to the KdpC family. As to quaternary structure, the system is composed of three essential subunits: KdpA, KdpB and KdpC.

Its subcellular location is the cell inner membrane. Functionally, part of the high-affinity ATP-driven potassium transport (or Kdp) system, which catalyzes the hydrolysis of ATP coupled with the electrogenic transport of potassium into the cytoplasm. This subunit acts as a catalytic chaperone that increases the ATP-binding affinity of the ATP-hydrolyzing subunit KdpB by the formation of a transient KdpB/KdpC/ATP ternary complex. This is Potassium-transporting ATPase KdpC subunit from Nitratidesulfovibrio vulgaris (strain DSM 19637 / Miyazaki F) (Desulfovibrio vulgaris).